The sequence spans 295 residues: Large ribosomal subunit protein uL2 (295 aa).

The segment at 243–295 is disordered; the sequence is WRPHTRGTAMNPVDHPHGGGEGRTRGKHPESPWDGRRRDTRREGVRSTPISLS. Residues 256-287 show a composition bias toward basic and acidic residues; that stretch reads DHPHGGGEGRTRGKHPESPWDGRRRDTRREGV.

The protein belongs to the universal ribosomal protein uL2 family. As to quaternary structure, part of the 50S ribosomal subunit. Forms a bridge to the 30S subunit in the 70S ribosome.

Functionally, one of the primary rRNA binding proteins. Required for association of the 30S and 50S subunits to form the 70S ribosome, for tRNA binding and peptide bond formation. It has been suggested to have peptidyltransferase activity; this is somewhat controversial. Makes several contacts with the 16S rRNA in the 70S ribosome. The sequence is that of Large ribosomal subunit protein uL2 from Aquifex pyrophilus.